Here is a 458-residue protein sequence, read N- to C-terminus: uncharacterized protein (458 aa).

Positions 1-10 (MQAEPKKSQA) are enriched in basic and acidic residues. Residues 1–20 (MQAEPKKSQAEQRAVAEPVS) form a disordered region. Residues 23–84 (VSLVGEEYEV…ARFLRADAVE (62 aa)) enclose the TRAM domain. Positions 97, 105, 108, and 193 each coordinate [4Fe-4S] cluster. S-adenosyl-L-methionine-binding residues include Q287, Y316, E340, and D384. C411 serves as the catalytic Nucleophile.

It belongs to the class I-like SAM-binding methyltransferase superfamily. RNA M5U methyltransferase family.

This is an uncharacterized protein from Streptomyces coelicolor (strain ATCC BAA-471 / A3(2) / M145).